The primary structure comprises 68 residues: Large ribosomal subunit protein uL29 (68 aa).

It belongs to the universal ribosomal protein uL29 family.

This chain is Large ribosomal subunit protein uL29, found in Picosynechococcus sp. (strain ATCC 27264 / PCC 7002 / PR-6) (Agmenellum quadruplicatum).